Here is a 194-residue protein sequence, read N- to C-terminus: Imidazoleglycerol-phosphate dehydratase (194 aa).

Belongs to the imidazoleglycerol-phosphate dehydratase family.

The protein resides in the cytoplasm. It catalyses the reaction D-erythro-1-(imidazol-4-yl)glycerol 3-phosphate = 3-(imidazol-4-yl)-2-oxopropyl phosphate + H2O. It functions in the pathway amino-acid biosynthesis; L-histidine biosynthesis; L-histidine from 5-phospho-alpha-D-ribose 1-diphosphate: step 6/9. The chain is Imidazoleglycerol-phosphate dehydratase from Chloroherpeton thalassium (strain ATCC 35110 / GB-78).